A 179-amino-acid polypeptide reads, in one-letter code: Putative FBD-associated F-box protein At3g12840 (179 aa).

Residues 14-60 (AARINDLPDDLLATVLSFVPTKDAVATSILSKRWRPIWKRAVNLESD) enclose the F-box domain. Residues 101-152 (KWKQPDFVPLSLYRSLEAFEWIGFKGREKTEKKAAFHILRNACNLKTMAITT) form the FBD domain.

The sequence is that of Putative FBD-associated F-box protein At3g12840 from Arabidopsis thaliana (Mouse-ear cress).